The following is a 128-amino-acid chain: RYamide neuropeptides (128 aa).

An N-terminal signal peptide occupies residues 1-23; that stretch reads MHARKLIVVLVYILTVLVSVAVS. A propeptide spanning residues 26–29 is cleaved from the precursor; the sequence is YTSE. Tyr44 is modified (tyrosine amide). Residues 47–63 constitute a propeptide that is removed on maturation; that stretch reads GGPSPNNKENKVNIRPR. Tyr73 is subject to Tyrosine amide. Residues 77 to 128 constitute a propeptide that is removed on maturation; sequence SGWSPNASLVYPVSTPLCGLDEDLSCAYTGISDLYRCTPRKGESEEFTTSSN.

Its subcellular location is the secreted. Its function is as follows. Neuropeptides RYamide-1 and RYamide-2 are ligands for the G-protein coupled receptor RYa-R. RYamide-2 is the most potent activator of RYa-R. This Tribolium castaneum (Red flour beetle) protein is RYamide neuropeptides.